Reading from the N-terminus, the 354-residue chain is Guanine nucleotide-binding protein G(i) subunit alpha (354 aa).

Residue G2 is the site of N-myristoyl glycine attachment. Residue C3 is the site of S-palmitoyl cysteine attachment. The 323-residue stretch at 32–354 folds into the G-alpha domain; that stretch reads REVKLLLLGA…KNNLKDCGLF (323 aa). Residues 35–48 are G1 motif; it reads KLLLLGAGESGKST. GTP-binding positions include 40–47, 175–181, 200–204, 269–272, and A326; these read GAGESGKS, LRTRVKT, DVGGQ, and NKKD. 2 residues coordinate Mg(2+): S47 and T181. Residues 173–181 are G2 motif; it reads DVLRTRVKT. The segment at 196-205 is G3 motif; sequence FKMFDVGGQR. The interval 265–272 is G4 motif; the sequence is ILFLNKKD. A G5 motif region spans residues 324–329; sequence TCATDT.

This sequence belongs to the G-alpha family. G(i/o/t/z) subfamily. As to quaternary structure, g proteins are composed of 3 units; alpha, beta and gamma. The alpha chain contains the guanine nucleotide binding site.

Its function is as follows. Guanine nucleotide-binding proteins (G proteins) are involved as modulators or transducers in various transmembrane signaling systems. The G(i) proteins are involved in hormonal regulation of adenylate cyclase: they inhibit the cyclase in response to beta-adrenergic stimuli. The protein is Guanine nucleotide-binding protein G(i) subunit alpha of Lymnaea stagnalis (Great pond snail).